The sequence spans 625 residues: Replication protein E1 (625 aa).

The short motif at 83–85 (KRK) is the Nuclear localization signal element. 3 positions are modified to phosphoserine; by host: Ser89, Ser93, and Ser107. Residues 106–115 (LSPRLNEISL) carry the Nuclear export signal motif. A disordered region spans residues 147-169 (GGGGQDVQAGGKENTRPDDGGGD). Residues 162–328 (RPDDGGGDAT…QTMFQHGLED (167 aa)) form a DNA-binding region region. Residues 427 to 577 (VEFIAFLAAL…FPFDQNGNPV (151 aa)) form the SF3 helicase domain. Position 453 to 460 (453 to 460 (GPPNTGKS)) interacts with ATP. Lys534 is covalently cross-linked (Glycyl lysine isopeptide (Lys-Gly) (interchain with G-Cter in SUMO)).

Belongs to the papillomaviridae E1 protein family. As to quaternary structure, can form hexamers. Interacts with E2 protein; this interaction increases E1 DNA binding specificity. Interacts with host DNA polymerase subunit POLA2. Interacts with host single stranded DNA-binding protein RPA1. Interacts with host TOP1; this interaction stimulates the enzymatic activity of TOP1. Phosphorylated. Post-translationally, sumoylated.

It is found in the host nucleus. The catalysed reaction is Couples ATP hydrolysis with the unwinding of duplex DNA by translocating in the 3'-5' direction.. It catalyses the reaction ATP + H2O = ADP + phosphate + H(+). ATP-dependent DNA 3'-5' helicase required for initiation of viral DNA replication. It forms a complex with the viral E2 protein. The E1-E2 complex binds to the replication origin which contains binding sites for both proteins. During the initial step, a dimer of E1 interacts with a dimer of protein E2 leading to a complex that binds the viral origin of replication with high specificity. Then, a second dimer of E1 displaces the E2 dimer in an ATP-dependent manner to form the E1 tetramer. Following this, two E1 monomers are added to each half of the site, which results in the formation of two E1 trimers on the viral ori. Subsequently, two hexamers will be created. The double hexamer acts as a bi-directional helicase machinery and unwinds the viral DNA and then recruits the host DNA polymerase to start replication. The polypeptide is Replication protein E1 (Macaca mulatta (Rhesus macaque)).